Here is a 105-residue protein sequence, read N- to C-terminus: Small ribosomal subunit protein uS10 (105 aa).

Belongs to the universal ribosomal protein uS10 family. As to quaternary structure, part of the 30S ribosomal subunit.

In terms of biological role, involved in the binding of tRNA to the ribosomes. The chain is Small ribosomal subunit protein uS10 from Anaplasma phagocytophilum (strain HZ).